Reading from the N-terminus, the 161-residue chain is Protein-export protein SecB (161 aa).

Belongs to the SecB family. In terms of assembly, homotetramer, a dimer of dimers. One homotetramer interacts with 1 SecA dimer.

It localises to the cytoplasm. In terms of biological role, one of the proteins required for the normal export of preproteins out of the cell cytoplasm. It is a molecular chaperone that binds to a subset of precursor proteins, maintaining them in a translocation-competent state. It also specifically binds to its receptor SecA. This is Protein-export protein SecB from Shewanella baltica (strain OS223).